Consider the following 147-residue polypeptide: Large ribosomal subunit protein uL13 (147 aa).

Belongs to the universal ribosomal protein uL13 family. Part of the 50S ribosomal subunit.

Its function is as follows. This protein is one of the early assembly proteins of the 50S ribosomal subunit, although it is not seen to bind rRNA by itself. It is important during the early stages of 50S assembly. This chain is Large ribosomal subunit protein uL13, found in Deinococcus geothermalis (strain DSM 11300 / CIP 105573 / AG-3a).